The sequence spans 311 residues: MADALNVGVNLEAFSQAIHCIQALRSSVTRVFDCLKDGMKNKESQEARERAFVSEFQDNLHCVNRDLNELERLSNLVGKPSENHPLHNSGLLSLDPVHDKTPLYSQLLQAYKWSNKLQFHAGLASGLLNQQSLKRSANQMGVSAKRRPKVQPTTLALPPQYIDDVISRIDRMFPEMTIQLSRPNGSSAMLLVTLGKVLKVIVVMRSLFIDRTIVKGYNENVYTEDGKLDIWSKSNYQVFQKVTDHATTALLHYQLPQMPDVVVRSFMTWLRSYIKLFQAPCQRCGKFLQDGLPPTWRDFRTLEAFHDSCRQ.

Belongs to the Mediator complex subunit 27 family. As to quaternary structure, component of the Mediator complex.

The protein resides in the nucleus. Its function is as follows. Component of the Mediator complex, a coactivator involved in the regulated transcription of nearly all RNA polymerase II-dependent genes. Mediator functions as a bridge to convey information from gene-specific regulatory proteins to the basal RNA polymerase II transcription machinery. Mediator is recruited to promoters by direct interactions with regulatory proteins and serves as a scaffold for the assembly of a functional preinitiation complex with RNA polymerase II and the general transcription factors. The polypeptide is Mediator of RNA polymerase II transcription subunit 27 (med27) (Xenopus tropicalis (Western clawed frog)).